We begin with the raw amino-acid sequence, 257 residues long: 3-methyl-2-oxobutanoate hydroxymethyltransferase (257 aa).

The Mg(2+) site is built by D42 and D86. Residues 42–43, D86, and K116 contribute to the 3-methyl-2-oxobutanoate site; that span reads DS. Residue E118 coordinates Mg(2+). The Proton acceptor role is filled by E185.

The protein belongs to the PanB family. As to quaternary structure, homodecamer; pentamer of dimers. It depends on Mg(2+) as a cofactor.

Its subcellular location is the cytoplasm. It carries out the reaction 3-methyl-2-oxobutanoate + (6R)-5,10-methylene-5,6,7,8-tetrahydrofolate + H2O = 2-dehydropantoate + (6S)-5,6,7,8-tetrahydrofolate. Its pathway is cofactor biosynthesis; (R)-pantothenate biosynthesis; (R)-pantoate from 3-methyl-2-oxobutanoate: step 1/2. Catalyzes the reversible reaction in which hydroxymethyl group from 5,10-methylenetetrahydrofolate is transferred onto alpha-ketoisovalerate to form ketopantoate. The chain is 3-methyl-2-oxobutanoate hydroxymethyltransferase from Prochlorococcus marinus (strain MIT 9515).